The sequence spans 292 residues: Probable endonuclease 4 (292 aa).

Residues histidine 71, histidine 111, glutamate 148, aspartate 182, histidine 185, histidine 217, aspartate 230, histidine 232, and glutamate 262 each contribute to the Zn(2+) site.

This sequence belongs to the AP endonuclease 2 family. It depends on Zn(2+) as a cofactor.

The catalysed reaction is Endonucleolytic cleavage to 5'-phosphooligonucleotide end-products.. Endonuclease IV plays a role in DNA repair. It cleaves phosphodiester bonds at apurinic or apyrimidinic (AP) sites, generating a 3'-hydroxyl group and a 5'-terminal sugar phosphate. This Aster yellows witches'-broom phytoplasma (strain AYWB) protein is Probable endonuclease 4.